The chain runs to 745 residues: VCP-like ATPase (745 aa).

Residues 231 to 238 (GPPGTGKT) and 508 to 515 (GPPGVGKT) contribute to the ATP site.

The protein belongs to the AAA ATPase family. CDC48 subfamily. Homohexamer. Forms a ring-shaped particle.

This chain is VCP-like ATPase (vat), found in Thermoplasma acidophilum (strain ATCC 25905 / DSM 1728 / JCM 9062 / NBRC 15155 / AMRC-C165).